We begin with the raw amino-acid sequence, 106 residues long: Transcriptional and immune response regulator (106 aa).

Monomer. Interacts with NOTCH2 (via ANK repeats), the interaction inhibits the nuclear translocation of NOTCH2 N2ICD. Interacts (C-terminus) with CBY1 (C-terminus), TCIM competes with CTNNB1 for the interaction with CBY1. Ubiquitous. Expressed in thyroid papillary carcinoma. Expressed in liver, expression levels decrease in hepatocellular carcinoma. Slightly detected in normal lung, its expression is highly induced in lung cancer cells (at protein level).

It is found in the cytoplasm. It localises to the nucleus. The protein resides in the nucleolus. The protein localises to the nucleus speckle. In terms of biological role, seems to be involved in the regulation of cell growth an differentiation, may play different and opposite roles depending on the tissue or cell type. May enhance the WNT-CTNNB1 pathway by relieving antagonistic activity of CBY1. Enhances the proliferation of follicular dendritic cells. Plays a role in the mitogen-activated MAPK2/3 signaling pathway, positively regulates G1-to-S-phase transition of the cell cycle. In endothelial cells, enhances key inflammatory mediators and inflammatory response through the modulation of NF-kappaB transcriptional regulatory activity. Involved in the regulation of heat shock response, seems to play a positive feedback with HSF1 to modulate heat-shock downstream gene expression. Plays a role in the regulation of hematopoiesis even if the mechanisms are unknown. In cancers such as thyroid or lung cancer, it has been described as promoter of cell proliferation, G1-to-S-phase transition and inhibitor of apoptosis. However, it negatively regulates self-renewal of liver cancer cells via suppresion of NOTCH2 signaling. This Homo sapiens (Human) protein is Transcriptional and immune response regulator.